We begin with the raw amino-acid sequence, 365 residues long: MNVDAMDPQQYDAQLDVKRQKLAQLFVDFETPELEVFASQKAHYRMRAEFRVWHEGEDLYYYMFDKAQNQKIRCEQFLPASQLINDMMPELMAALRPNPVLRHKLFQVDFLSTLSGEILVSLLYHKQLDAQWQEEAQALKEALSSKFKVDIIGRARKQKLVMDRDFVIESLPVNGKQLTYKQVENSFTQPNGEVAIKMLEWAIDITRDSSGDLLELYCGNGNFSIALAQNFNRVLATELAKPSVDSAQYNIEANQIDNLQIIRMSAEDFTDALAKKRSFRRLEGVDLDSYDCNTIFVDPPRAGLDDNTLSMVQGYERILYISCNPNTLLDNLKVLDKTHKITRFALFDQFPYTDHMESGVLLERR.

S-adenosyl-L-methionine is bound by residues Gln-189, Tyr-217, Asn-222, Glu-238, and Asp-298. The Nucleophile role is filled by Cys-323. Catalysis depends on Glu-357, which acts as the Proton acceptor.

This sequence belongs to the class I-like SAM-binding methyltransferase superfamily. RNA M5U methyltransferase family. TrmA subfamily.

It catalyses the reaction uridine(54) in tRNA + S-adenosyl-L-methionine = 5-methyluridine(54) in tRNA + S-adenosyl-L-homocysteine + H(+). The catalysed reaction is uridine(341) in tmRNA + S-adenosyl-L-methionine = 5-methyluridine(341) in tmRNA + S-adenosyl-L-homocysteine + H(+). Functionally, dual-specificity methyltransferase that catalyzes the formation of 5-methyluridine at position 54 (m5U54) in all tRNAs, and that of position 341 (m5U341) in tmRNA (transfer-mRNA). In Shewanella loihica (strain ATCC BAA-1088 / PV-4), this protein is tRNA/tmRNA (uracil-C(5))-methyltransferase.